We begin with the raw amino-acid sequence, 447 residues long: Clusterin (447 aa).

The first 22 residues, 1-22, serve as a signal peptide directing secretion; that stretch reads MKTLLLCVGLLLSWERGQVLGD. The Nuclear localization signal motif lies at 77 to 80; sequence KKNK. N-linked (GlcNAc...) asparagine glycans are attached at residues asparagine 85 and asparagine 102. Cystine bridges form between cysteine 101–cysteine 311, cysteine 112–cysteine 303, cysteine 115–cysteine 300, cysteine 120–cysteine 293, and cysteine 128–cysteine 283. Phosphoserine is present on serine 132. 5 N-linked (GlcNAc...) asparagine glycosylation sites follow: asparagine 144, asparagine 289, asparagine 326, asparagine 352, and asparagine 372. A Phosphoserine modification is found at serine 394. Residues 441–445 carry the Nuclear localization signal motif; sequence RKKKR.

The protein belongs to the clusterin family. In terms of assembly, antiparallel disulfide-linked heterodimer of an alpha chain and a beta chain. Self-associates and forms higher oligomers. Interacts with a broad range of misfolded proteins, including APP, APOC2 and LYZ. Slightly acidic pH promotes interaction with misfolded proteins. Forms high-molecular weight oligomers upon interaction with misfolded proteins. Interacts with APOA1, LRP2, CLUAP1 and PON1. Interacts with the complement membrane attack complex. Interacts (via alpha chain) with XRCC6. Interacts with SYVN1, COMMD1, BTRC, CUL1 and with ubiquitin and SCF (SKP1-CUL1-F-box protein) E3 ubiquitin-protein ligase complexes. Interacts (via alpha chain) with BAX in stressed cells, where BAX undergoes a conformation change leading to association with the mitochondrial membrane. Does not interact with BAX in unstressed cells. Found in a complex with LTF, CLU, EPPIN and SEMG1. Interacts (immaturely glycosylated pre-secreted form) with HSPA5; this interaction promotes CLU stability and facilitates stress-induced CLU retrotranslocation from the secretory pathway to the mitochondria, thereby reducing stress-induced apoptosis by stabilizing mitochondrial membrane integrity. Interacts with BCL2L1; this interaction releases and activates BAX and promotes cell death. Interacts with TGFBR2 and ACVR1. Interacts (secreted form) with STMN3; this interaction may act as an important modulator during neuronal differentiation. Interacts with VLDLR and LRP8. Proteolytically cleaved on its way through the secretory system, probably within the Golgi lumen. Proteolytic cleavage is not necessary for its chaperone activity. All non-secreted forms are not proteolytically cleaved. Chaperone activity of uncleaved forms is dependent on a non-reducing environment. Post-translationally, polyubiquitinated, leading to proteasomal degradation. Under cellular stress, the intracellular level of cleaved form is reduced due to proteasomal degradation. In terms of processing, heavily N-glycosylated. About 30% of the protein mass is comprised of complex N-linked carbohydrate. Endoplasmic reticulum (ER) stress induces changes in glycosylation status and increases level of hypoglycosylated forms. Core carbohydrates are essential for chaperone activity. Non-secreted forms are hypoglycosylated or unglycosylated.

It localises to the secreted. The protein resides in the nucleus. It is found in the cytoplasm. Its subcellular location is the mitochondrion membrane. The protein localises to the cytosol. It localises to the microsome. The protein resides in the endoplasmic reticulum. It is found in the mitochondrion. Its subcellular location is the perinuclear region. The protein localises to the cytoplasmic vesicle. It localises to the secretory vesicle. The protein resides in the chromaffin granule. Its function is as follows. Functions as extracellular chaperone that prevents aggregation of non native proteins. Prevents stress-induced aggregation of blood plasma proteins. Inhibits formation of amyloid fibrils by APP, APOC2, B2M, CALCA, CSN3, SNCA and aggregation-prone LYZ variants (in vitro). Does not require ATP. Maintains partially unfolded proteins in a state appropriate for subsequent refolding by other chaperones, such as HSPA8/HSC70. Does not refold proteins by itself. Binding to cell surface receptors triggers internalization of the chaperone-client complex and subsequent lysosomal or proteasomal degradation. When secreted, protects cells against apoptosis and against cytolysis by complement: inhibits assembly of the complement membrane attack complex (MAC) by preventing polymerization of C9 pore component of the MAC complex. Intracellular forms interact with ubiquitin and SCF (SKP1-CUL1-F-box protein) E3 ubiquitin-protein ligase complexes and promote the ubiquitination and subsequent proteasomal degradation of target proteins. Promotes proteasomal degradation of COMMD1 and IKBKB. Modulates NF-kappa-B transcriptional activity. Following stress, promotes apoptosis. Inhibits apoptosis when associated with the mitochondrial membrane by interference with BAX-dependent release of cytochrome c into the cytoplasm. Plays a role in the regulation of cell proliferation. An intracellular form suppresses stress-induced apoptosis by stabilizing mitochondrial membrane integrity through interaction with HSPA5. Secreted form does not affect caspase or BAX-mediated intrinsic apoptosis and TNF-induced NF-kappa-B-activity. Secreted form act as an important modulator during neuronal differentiation through interaction with STMN3. Plays a role in the clearance of immune complexes that arise during cell injury. The sequence is that of Clusterin (CLU) from Oryctolagus cuniculus (Rabbit).